The following is a 571-amino-acid chain: Urease subunit alpha (571 aa).

Residues 133 to 571 (GGIDTHVHFI…LPLTQRYFLF (439 aa)) form the Urease domain. Ni(2+)-binding residues include H138, H140, and K221. K221 carries the N6-carboxylysine modification. H223 lines the substrate pocket. Positions 250 and 276 each coordinate Ni(2+). H324 serves as the catalytic Proton donor. D364 contributes to the Ni(2+) binding site.

This sequence belongs to the metallo-dependent hydrolases superfamily. Urease alpha subunit family. In terms of assembly, heterotrimer of UreA (gamma), UreB (beta) and UreC (alpha) subunits. Three heterotrimers associate to form the active enzyme. The cofactor is Ni cation. In terms of processing, carboxylation allows a single lysine to coordinate two nickel ions.

Its subcellular location is the cytoplasm. The enzyme catalyses urea + 2 H2O + H(+) = hydrogencarbonate + 2 NH4(+). Its pathway is nitrogen metabolism; urea degradation; CO(2) and NH(3) from urea (urease route): step 1/1. This is Urease subunit alpha from Staphylococcus aureus (strain bovine RF122 / ET3-1).